The sequence spans 150 residues: Thyroid hormone-inducible hepatic protein (150 aa).

The segment at 83 to 105 (KVAGNEGSEAENEAAETEEAEED) is disordered. At Ser-90 the chain carries Phosphoserine. Acidic residues predominate over residues 90 to 105 (SEAENEAAETEEAEED).

Belongs to the SPOT14 family. As to quaternary structure, homodimer. Heterodimer with MID1IP1. Interacts with THRB and PLAGL1. As to expression, highly expressed in liver, lactating mammary gland, epididymal, retroperitoneal and brown fat. Mainly expressed in tissues that synthesize triglycerides.

Its subcellular location is the nucleus. The protein localises to the cytoplasm. Functionally, plays a role in the regulation of lipogenesis, especially in lactating mammary gland. Important for the biosynthesis of triglycerides with medium-length fatty acid chains. May modulate lipogenesis by interacting with MID1IP1 and preventing its interaction with ACACA. May function as transcriptional coactivator. May modulate the transcription factor activity of THRB. The polypeptide is Thyroid hormone-inducible hepatic protein (Thrsp) (Rattus norvegicus (Rat)).